The sequence spans 320 residues: MATESLAEVPVPGCNCFWYLGVVAAVWWGLRAAWCLLDGARVWVLGSGAQVGPRIGKWAVVTGATDGIGKAYAEELAKRGMNIVLISRSPEKLEEVAKQIKEKFKVETKIIAADFGKPTEIYGRIESGLRDLEIGVLVNNVGVSYEHPEYFLEIPDLENTLDKMININITSVCQMTRLVLPGMLGRGRGVILNISSASGMYPVPLLTVYSATKAFVDFFSRGLQAEYRSKGVTVQSVLPFYVATKLAKIRKPTWDKPSPETYVQSALNTVGLQTQTNGYLPHAIMGWISTSLVPVSTAISLGMKMNKGLRARFLKRAKQK.

The helical transmembrane segment at 17–37 (FWYLGVVAAVWWGLRAAWCLL) threads the bilayer. Residue 56 to 85 (GKWAVVTGATDGIGKAYAEELAKRGMNIVL) coordinates NADP(+). Helical transmembrane passes span 189–209 (GVILNISSASGMYPVPLLTVY) and 283–303 (AIMGWISTSLVPVSTAISLGM). Substrate is bound at residue Ser-196. Tyr-209 acts as the Proton acceptor in catalysis.

It belongs to the short-chain dehydrogenases/reductases (SDR) family. 17-beta-HSD 3 subfamily.

Its subcellular location is the endoplasmic reticulum membrane. The enzyme catalyses a very-long-chain (3R)-3-hydroxyacyl-CoA + NADP(+) = a very-long-chain 3-oxoacyl-CoA + NADPH + H(+). It catalyses the reaction 17beta-estradiol + NAD(+) = estrone + NADH + H(+). It carries out the reaction 17beta-estradiol + NADP(+) = estrone + NADPH + H(+). The catalysed reaction is 3-oxooctadecanoyl-CoA + NADPH + H(+) = (3R)-hydroxyoctadecanoyl-CoA + NADP(+). The enzyme catalyses (7Z,10Z,13Z,16Z)-3-oxodocosatetraenoyl-CoA + NADPH + H(+) = (3R)-hydroxy-(7Z,10Z,13Z,16Z)-docosatetraenoyl-CoA + NADP(+). It catalyses the reaction 3-oxo-(7Z,10Z,13Z,16Z,19Z)-docosapentaenoyl-CoA + NADPH + H(+) = (3R)-hydroxy-(7Z,10Z,13Z,16Z,19Z)-docosapentaenoyl-CoA + NADP(+). It carries out the reaction (8Z,11Z,14Z)-3-oxoeicosatrienoyl-CoA + NADPH + H(+) = (3R)-hydroxy-(8Z,11Z,14Z)-eicosatrienoyl-CoA + NADP(+). It functions in the pathway lipid metabolism; fatty acid biosynthesis. The protein operates within steroid biosynthesis; estrogen biosynthesis. Its function is as follows. Catalyzes the second of the four reactions of the long-chain fatty acids elongation cycle. This endoplasmic reticulum-bound enzymatic process, allows the addition of two carbons to the chain of long- and very long-chain fatty acids/VLCFAs per cycle. This enzyme has a 3-ketoacyl-CoA reductase activity, reducing 3-ketoacyl-CoA to 3-hydroxyacyl-CoA, within each cycle of fatty acid elongation. Thereby, it may participate in the production of VLCFAs of different chain lengths that are involved in multiple biological processes as precursors of membrane lipids and lipid mediators. May also catalyze the transformation of estrone (E1) into estradiol (E2) and play a role in estrogen formation. In Xenopus tropicalis (Western clawed frog), this protein is Very-long-chain 3-oxoacyl-CoA reductase (hsd17b12).